We begin with the raw amino-acid sequence, 213 residues long: Orotate phosphoribosyltransferase (213 aa).

5-phospho-alpha-D-ribose 1-diphosphate is bound at residue lysine 26. 34-35 (FF) lines the orotate pocket. Residues 72 to 73 (YK), arginine 99, lysine 100, lysine 103, histidine 105, and 124 to 132 (DDVITAGTA) each bind 5-phospho-alpha-D-ribose 1-diphosphate. Orotate-binding residues include threonine 128 and arginine 156.

The protein belongs to the purine/pyrimidine phosphoribosyltransferase family. PyrE subfamily. In terms of assembly, homodimer. Requires Mg(2+) as cofactor.

The enzyme catalyses orotidine 5'-phosphate + diphosphate = orotate + 5-phospho-alpha-D-ribose 1-diphosphate. Its pathway is pyrimidine metabolism; UMP biosynthesis via de novo pathway; UMP from orotate: step 1/2. In terms of biological role, catalyzes the transfer of a ribosyl phosphate group from 5-phosphoribose 1-diphosphate to orotate, leading to the formation of orotidine monophosphate (OMP). This chain is Orotate phosphoribosyltransferase, found in Pseudomonas syringae pv. syringae (strain B728a).